The chain runs to 91 residues: Large ribosomal subunit protein uL22 (91 aa).

It belongs to the universal ribosomal protein uL22 family. As to quaternary structure, part of the 50S ribosomal subunit.

This protein binds specifically to 23S rRNA; its binding is stimulated by other ribosomal proteins, e.g. L4, L17, and L20. It is important during the early stages of 50S assembly. It makes multiple contacts with different domains of the 23S rRNA in the assembled 50S subunit and ribosome. Its function is as follows. The globular domain of the protein is located near the polypeptide exit tunnel on the outside of the subunit, while an extended beta-hairpin is found that lines the wall of the exit tunnel in the center of the 70S ribosome. This chain is Large ribosomal subunit protein uL22 (rplV), found in Pigeon pea witches'-broom phytoplasma.